The chain runs to 272 residues: Shikimate dehydrogenase (NADP(+)) (272 aa).

Shikimate contacts are provided by residues 14 to 16 (SKS) and threonine 61. The Proton acceptor role is filled by lysine 65. Residue glutamate 77 coordinates NADP(+). Asparagine 86 and aspartate 102 together coordinate shikimate. NADP(+) is bound by residues 126–130 (GAGGA), 149–154 (NRTVFR), and methionine 213. Tyrosine 215 is a binding site for shikimate. Glycine 237 lines the NADP(+) pocket.

It belongs to the shikimate dehydrogenase family. Homodimer.

The catalysed reaction is shikimate + NADP(+) = 3-dehydroshikimate + NADPH + H(+). It functions in the pathway metabolic intermediate biosynthesis; chorismate biosynthesis; chorismate from D-erythrose 4-phosphate and phosphoenolpyruvate: step 4/7. Its function is as follows. Involved in the biosynthesis of the chorismate, which leads to the biosynthesis of aromatic amino acids. Catalyzes the reversible NADPH linked reduction of 3-dehydroshikimate (DHSA) to yield shikimate (SA). The protein is Shikimate dehydrogenase (NADP(+)) of Escherichia coli O127:H6 (strain E2348/69 / EPEC).